The primary structure comprises 505 residues: Trans-cinnamate 4-monooxygenase C4H2 (505 aa).

Short sequence motifs (nuclear localization signal) lie at residues 161–168 (VKKMKESN) and 247–254 (EKRLKLFK). Cys447 serves as a coordination point for heme.

This sequence belongs to the cytochrome P450 family. The cofactor is heme.

It localises to the nucleus. It carries out the reaction (E)-cinnamate + reduced [NADPH--hemoprotein reductase] + O2 = (E)-4-coumarate + oxidized [NADPH--hemoprotein reductase] + H2O + H(+). It participates in phenylpropanoid metabolism; trans-4-coumarate biosynthesis; trans-4-coumarate from trans-cinnamate: step 1/1. In terms of biological role, component of the floral volatile benzenoid/phenylpropanoid (FVBP) biosynthetic pathway that controls carbon flux to pigments essential for pollination or UV protection, to numerous pytoalexins synthesized by plants when challenged by pathogens, and to lignins. The sequence is that of Trans-cinnamate 4-monooxygenase C4H2 from Petunia hybrida (Petunia).